Reading from the N-terminus, the 182-residue chain is NADH-quinone oxidoreductase subunit I (182 aa).

4Fe-4S ferredoxin-type domains lie at Ile-50 to Ala-82 and Glu-92 to Asp-121. 8 residues coordinate [4Fe-4S] cluster: Cys-62, Cys-65, Cys-68, Cys-72, Cys-101, Cys-104, Cys-107, and Cys-111.

It belongs to the complex I 23 kDa subunit family. NDH-1 is composed of 14 different subunits. Subunits NuoA, H, J, K, L, M, N constitute the membrane sector of the complex. The cofactor is [4Fe-4S] cluster.

The protein localises to the cell inner membrane. It catalyses the reaction a quinone + NADH + 5 H(+)(in) = a quinol + NAD(+) + 4 H(+)(out). Its function is as follows. NDH-1 shuttles electrons from NADH, via FMN and iron-sulfur (Fe-S) centers, to quinones in the respiratory chain. The immediate electron acceptor for the enzyme in this species is believed to be ubiquinone. Couples the redox reaction to proton translocation (for every two electrons transferred, four hydrogen ions are translocated across the cytoplasmic membrane), and thus conserves the redox energy in a proton gradient. The chain is NADH-quinone oxidoreductase subunit I from Psychrobacter arcticus (strain DSM 17307 / VKM B-2377 / 273-4).